A 412-amino-acid polypeptide reads, in one-letter code: Serine hydroxymethyltransferase (412 aa).

(6S)-5,6,7,8-tetrahydrofolate is bound by residues leucine 117 and 121 to 123; that span reads GHL. An N6-(pyridoxal phosphate)lysine modification is found at lysine 226. Residue 349–351 coordinates (6S)-5,6,7,8-tetrahydrofolate; that stretch reads SPF.

Belongs to the SHMT family. Homodimer. Pyridoxal 5'-phosphate is required as a cofactor.

It is found in the cytoplasm. It catalyses the reaction (6R)-5,10-methylene-5,6,7,8-tetrahydrofolate + glycine + H2O = (6S)-5,6,7,8-tetrahydrofolate + L-serine. It functions in the pathway one-carbon metabolism; tetrahydrofolate interconversion. Its pathway is amino-acid biosynthesis; glycine biosynthesis; glycine from L-serine: step 1/1. Functionally, catalyzes the reversible interconversion of serine and glycine with tetrahydrofolate (THF) serving as the one-carbon carrier. This reaction serves as the major source of one-carbon groups required for the biosynthesis of purines, thymidylate, methionine, and other important biomolecules. Also exhibits THF-independent aldolase activity toward beta-hydroxyamino acids, producing glycine and aldehydes, via a retro-aldol mechanism. The polypeptide is Serine hydroxymethyltransferase (Oleidesulfovibrio alaskensis (strain ATCC BAA-1058 / DSM 17464 / G20) (Desulfovibrio alaskensis)).